The primary structure comprises 929 residues: Bifunctional glutamine synthetase adenylyltransferase/adenylyl-removing enzyme (929 aa).

Residues 1-423 (MSTPIDSSRA…RHFEQIFAAR (423 aa)) form an adenylyl removase region. An adenylyl transferase region spans residues 433–929 (ARIRPEQSGD…FQLWEDIFGT (497 aa)).

This sequence belongs to the GlnE family. Mg(2+) serves as cofactor.

It carries out the reaction [glutamine synthetase]-O(4)-(5'-adenylyl)-L-tyrosine + phosphate = [glutamine synthetase]-L-tyrosine + ADP. The enzyme catalyses [glutamine synthetase]-L-tyrosine + ATP = [glutamine synthetase]-O(4)-(5'-adenylyl)-L-tyrosine + diphosphate. Its function is as follows. Involved in the regulation of glutamine synthetase GlnA, a key enzyme in the process to assimilate ammonia. When cellular nitrogen levels are high, the C-terminal adenylyl transferase (AT) inactivates GlnA by covalent transfer of an adenylyl group from ATP to specific tyrosine residue of GlnA, thus reducing its activity. Conversely, when nitrogen levels are low, the N-terminal adenylyl removase (AR) activates GlnA by removing the adenylyl group by phosphorolysis, increasing its activity. The regulatory region of GlnE binds the signal transduction protein PII (GlnB) which indicates the nitrogen status of the cell. The polypeptide is Bifunctional glutamine synthetase adenylyltransferase/adenylyl-removing enzyme (Nitrosomonas europaea (strain ATCC 19718 / CIP 103999 / KCTC 2705 / NBRC 14298)).